The primary structure comprises 254 residues: MAIANKNIIFVAGLGGIGFDTSREIVKSGPKNLVILDRIENPAAIAELKALNPKVTVTFYPYDVTVPVAETTKLLKTIFDKLKTVDLLINGAGILDDYQIERTIAVNFTGTVNTTTAIMSFWDKRKGGPGGVIANICSVTGFNAIYQVPVYSASKAAALSFTNSLAKLAPITGVTAYSINPGITKTTLVHKFNSWLDVEPRVAELLLEHPTQTSLECAQNFVKAIEANQNGAIWKLDLGTLEAIEWTKHWDSHI.

NAD(+) is bound at residue 10 to 33 (FVAGLGGIGFDTSREIVKSGPKNL). Substrate is bound at residue Ser-138. The active-site Proton acceptor is the Tyr-151.

Belongs to the short-chain dehydrogenases/reductases (SDR) family. In terms of assembly, homodimer.

The catalysed reaction is a primary alcohol + NAD(+) = an aldehyde + NADH + H(+). The enzyme catalyses a secondary alcohol + NAD(+) = a ketone + NADH + H(+). This chain is Alcohol dehydrogenase 1 (Adh1), found in Drosophila navojoa (Fruit fly).